A 348-amino-acid chain; its full sequence is Rhodopsin (348 aa).

Topologically, residues 1 to 33 are extracellular; sequence TEGPYFYVPMVNTTGIVRSPYEYPQYYLVNPAA. Asn12 is a glycosylation site (N-linked (GlcNAc...) asparagine). The helical transmembrane segment at 34–58 threads the bilayer; that stretch reads YAVLGAYMFFLIILGFPINFLTLYV. Residues 59–70 are Cytoplasmic-facing; the sequence is TLEHKKLRTPLN. A helical transmembrane segment spans residues 71 to 93; sequence YILLNLAVADLFMVIGGFTTTMY. The Extracellular segment spans residues 94-107; sequence SSMHGYFVLGRLGC. A disulfide bridge links Cys107 with Cys184. A helical transmembrane segment spans residues 108–130; it reads NLEGFSATLGGMISLWSLAVLAI. The 'Ionic lock' involved in activated form stabilization motif lies at 131-133; that stretch reads ERW. Over 131–149 the chain is Cytoplasmic; that stretch reads ERWVVVCKPISNFRFGENH. A helical membrane pass occupies residues 150-170; the sequence is AIMGVSLTWTMALACTVPPLV. Topologically, residues 171-199 are extracellular; sequence GWSRYIPEGMQCSCGIDYYTRAEGFNNES. The N-linked (GlcNAc...) asparagine glycan is linked to Asn197. The chain crosses the membrane as a helical span at residues 200–221; sequence FVLYMFFCHFMVPLIIIFFCYG. Residues 222–249 lie on the Cytoplasmic side of the membrane; it reads RLLCAVKEAAAAQQESETTQRAEREVTR. A helical membrane pass occupies residues 250 to 271; the sequence is MVILMVIGYLVCWLPYASVAWF. Over 272–283 the chain is Extracellular; that stretch reads IFTHQGSEFGPL. A helical membrane pass occupies residues 284–305; that stretch reads FMTIPAFFAKSSSIYNPVIYIC. At Lys293 the chain carries N6-(retinylidene)lysine. Residues 306-348 lie on the Cytoplasmic side of the membrane; that stretch reads MNKQFRNCMITTLFCGKNPFEGEEEGASSTKTEASSASSVSPA. Residue Cys320 is the site of S-palmitoyl cysteine attachment. The disordered stretch occupies residues 327-348; sequence GEEEGASSTKTEASSASSVSPA. Over residues 332–348 the composition is skewed to low complexity; it reads ASSTKTEASSASSVSPA.

It belongs to the G-protein coupled receptor 1 family. Opsin subfamily. Post-translationally, phosphorylated on some or all of the serine and threonine residues present in the C-terminal region. Contains one covalently linked retinal chromophore.

It localises to the membrane. Its subcellular location is the cell projection. The protein resides in the cilium. It is found in the photoreceptor outer segment. Photoreceptor required for image-forming vision at low light intensity. While most salt water fish species use retinal as chromophore, most freshwater fish use 3-dehydroretinal, or a mixture of retinal and 3-dehydroretinal. Light-induced isomerization of 11-cis to all-trans retinal triggers a conformational change that activates signaling via G-proteins. Subsequent receptor phosphorylation mediates displacement of the bound G-protein alpha subunit by arrestin and terminates signaling. This chain is Rhodopsin (rho), found in Neoniphon argenteus (Clearfin squirrelfish).